A 307-amino-acid polypeptide reads, in one-letter code: Potassium channel subfamily K member 7 (307 aa).

Residues 1 to 10 (MGSLKPWARY) lie on the Cytoplasmic side of the membrane. A helical transmembrane segment spans residues 11–31 (LLLLMAHLLAMGLGAVVLQAL). N-linked (GlcNAc...) asparagine glycosylation is present at asparagine 83. An intramembrane region (pore-forming) is located at residues 92–118 (LPSALLFTASILTTTGYGHMAPLSSGG). A helical membrane pass occupies residues 120 to 140 (AFCVVYAALGLPASLALVAAL). Residues 141-172 (RHCLLPVFSRPGDWVAIRWQLAPAQAALLQAA) lie on the Cytoplasmic side of the membrane. The chain crosses the membrane as a helical span at residues 173–193 (GLGLLVACVFMLLPALVLWGV). The pore-forming intramembrane region spans 199-227 (LLEAIYFCFGSLSTIGLGDLLPAHGRGLH). The helical transmembrane segment at 233 to 253 (LGQFALLGYLLLGLLAMLLAV) threads the bilayer. Residues 254–307 (ETFSELPQVRAMVKFFGPSGSRTDEDQDGILGQDELALSTVLPDAPVLGPTTPA) lie on the Cytoplasmic side of the membrane.

The protein belongs to the two pore domain potassium channel (TC 1.A.1.8) family. Homodimer. As to expression, detected in embryo, eye, lung and liver. Weakly expressed in colon, testis, atria, kidney, intestine, bladder, uterus, ovary, salivary gland, thymus and brain stem. Not detected in brain, cerebellum, spinal cord, heart, ventricle, skeletal muscle, liver, placenta and pancreas. In the eye, highly expressed in the retinal ganglion cell layer and inner nuclear layer.

It localises to the membrane. In terms of biological role, probable potassium channel subunit. No channel activity observed in vitro as protein remains in the endoplasmic reticulum. May need to associate with an as yet unknown partner in order to reach the plasma membrane. The protein is Potassium channel subfamily K member 7 (Kcnk7) of Mus musculus (Mouse).